Consider the following 744-residue polypeptide: MPESPDAYVNRTYDQTVAVRRSLKRRNSPAASEDGLGWPRRLNLRILAQPCRTSSPLGEDFDYAKEFLSLDLDELARDIDEVLTTSQDWWPADFGHYGPLVLRMAWHFAGTYRIGDGRGGAGAGMLRFAPLNSFPDNRNLDKARRLLWPVKKKYGRKISWSDLMIFAGNRALESMGCRTFGFAGGREDAWEADETYWGPESTWLADERHSGVRDLDQPLAASEMGLIYVDPQGPATLPDPLASARDIRETFRRMGMNDEETVALIAGGHTFGKSHGPTDPSRCLGPEPEGAPLEALGLGWVNSFGTGNGADTVTSGLDGIWTATPTKWDMSFLTTLFAYEWDVALSPAGMWQWVPRNGAGAGTVPDPYDPSRTHAPTMLTTDLALQEDPRYRVIALRFLENPDEFADTFARAWFKLTHIDMGPIQRYLGPLVPTERMIWQDPVPHVDHELADADDVAALKREILGSGLSVSQLVTTAWASASTFRNSDKRGGANGARIRLEPQRSWAVNEPEKLAIVLDRLERIRRRFNDSHRGGKQISAADLIMLGGCAAVEHAAAEAGHPIEVPCRLGRTDAPQEWTDIEWFSALEPTADAFRNYVGEGNRPPPEHLLVDRASQLTLTAPQMTVLLGGLRVLGANHGGSPLGVFTASPGALSNDFFVNLLDVNIEWTPRADTADWTAAYEGRDRRTGEVTWIASRVDLSFASDPVLRAISEVYASADAEEKFVRDFVSAWDKVMNLDLFDRT.

Residues 106–228 constitute a cross-link (tryptophyl-tyrosyl-methioninium (Trp-Tyr) (with M-254)); it reads WHFAGTYRIG…LAASEMGLIY (123 aa). Catalysis depends on H107, which acts as the Proton acceptor. Positions 228 to 254 form a cross-link, tryptophyl-tyrosyl-methioninium (Tyr-Met) (with W-106); it reads YVDPQGPATLPDPLASARDIRETFRRM. A heme b-binding site is contributed by H269.

It belongs to the peroxidase family. Peroxidase/catalase subfamily. As to quaternary structure, homodimer or homotetramer. Requires heme b as cofactor. Post-translationally, formation of the three residue Trp-Tyr-Met cross-link is important for the catalase, but not the peroxidase activity of the enzyme.

The catalysed reaction is H2O2 + AH2 = A + 2 H2O. It carries out the reaction 2 H2O2 = O2 + 2 H2O. Functionally, bifunctional enzyme with both catalase and broad-spectrum peroxidase activity. The protein is Catalase-peroxidase 3 of Mycolicibacterium smegmatis (strain ATCC 700084 / mc(2)155) (Mycobacterium smegmatis).